A 461-amino-acid chain; its full sequence is Alkaline phosphatase 4 (461 aa).

The signal sequence occupies residues Met1–Ala41. Asp58 provides a ligand contact to Mg(2+). Residue Asp58 participates in Zn(2+) binding. Catalysis depends on Ser108, which acts as the Phosphoserine intermediate. Thr161 and Glu282 together coordinate Mg(2+). Zn(2+) is bound by residues Asp287, His291, Asp329, His330, and His423.

It belongs to the alkaline phosphatase family. Monomer. Requires Mg(2+) as cofactor. Zn(2+) is required as a cofactor.

It carries out the reaction a phosphate monoester + H2O = an alcohol + phosphate. The polypeptide is Alkaline phosphatase 4 (phoA) (Bacillus subtilis (strain 168)).